Consider the following 684-residue polypeptide: Multisite-specific tRNA:(cytosine-C(5))-methyltransferase (684 aa).

Over residues 1–12 (MARRKNFKKGNK) the composition is skewed to basic residues. Residues 1-24 (MARRKNFKKGNKKTFGARDDSRAQ) are disordered. Residues 173-179 (CAAPGSK), Asp-202, Asp-229, and Asp-257 each bind S-adenosyl-L-methionine. Residue Cys-310 is the Nucleophile of the active site. The residue at position 426 (Thr-426) is a Phosphothreonine. Ser-431 bears the Phosphoserine mark. The segment at 650-684 (KATPSAEEKEKEKETTESPAETTTGTSTEAPSAAN) is disordered. Residues 655–665 (AEEKEKEKETT) are compositionally biased toward basic and acidic residues. Positions 666–684 (ESPAETTTGTSTEAPSAAN) are enriched in low complexity. Ser-667 bears the Phosphoserine mark.

It belongs to the class I-like SAM-binding methyltransferase superfamily. RsmB/NOP family. TRM4 subfamily.

It localises to the nucleus. The protein localises to the nucleolus. The enzyme catalyses cytidine(34) in tRNA precursor + S-adenosyl-L-methionine = 5-methylcytidine(34) in tRNA precursor + S-adenosyl-L-homocysteine + H(+). It catalyses the reaction cytidine(40) in tRNA precursor + S-adenosyl-L-methionine = 5-methylcytidine(40) in tRNA precursor + S-adenosyl-L-homocysteine + H(+). It carries out the reaction cytidine(48) in tRNA + S-adenosyl-L-methionine = 5-methylcytidine(48) in tRNA + S-adenosyl-L-homocysteine + H(+). The catalysed reaction is cytidine(49) in tRNA + S-adenosyl-L-methionine = 5-methylcytidine(49) in tRNA + S-adenosyl-L-homocysteine + H(+). Methylates cytosine to m5C at several positions in different tRNAs and pre-tRNAs containing intron. Able to modify tRNAs at all four positions (34, 40, 48 and 49) at which m5C has been found in tRNAs. May be involved in ribosome biogenesis as its disruption leads to increased sensitivity to the antibiotic paromomycin. In Saccharomyces cerevisiae (strain ATCC 204508 / S288c) (Baker's yeast), this protein is Multisite-specific tRNA:(cytosine-C(5))-methyltransferase (NCL1).